A 499-amino-acid chain; its full sequence is Pleckstrin homology domain-containing family O member 2 (499 aa).

The segment covering Met-1 to Gln-11 has biased composition (basic and acidic residues). The disordered stretch occupies residues Met-1–Lys-21. A PH domain is found at Thr-18 to Asn-119. Ser-167 is modified (phosphoserine). Residues Leu-170 to His-419 form a disordered region. Residues Arg-201 to Ala-212 are compositionally biased toward pro residues. Low complexity predominate over residues Ser-229 to Ser-238. 2 positions are modified to phosphoserine: Ser-237 and Ser-238. The segment covering Glu-246–Ser-258 has biased composition (acidic residues). Ser-273 carries the post-translational modification Phosphoserine. A phosphothreonine mark is found at Thr-298 and Thr-311. Composition is skewed to low complexity over residues Glu-329–Glu-349 and Ala-367–Pro-386. Ser-399 is modified (phosphoserine). A coiled-coil region spans residues Glu-416–Thr-492.

This Bos taurus (Bovine) protein is Pleckstrin homology domain-containing family O member 2 (PLEKHO2).